Consider the following 303-residue polypeptide: MIKQRTLKNIIRATGVGLHSGEKVYLTLKPAPVDTGIVFRRIDLDPVVDIPARAENVGETTMSTTLVKGDVKVDTVEHLLSAMAGLGIDNAYVELSAPEVPIMDGSAGPFVFLIQSAGLQEQEACKRFIRIKREVAVEEDDKRAVFLPFDGFKVSFEIDFDHPVFRGRTQTASIDFSSTSFVKEVSRARTFGFMRDIEFLRSHNLALGGSVDNAIVVDENRVLNEDGLRYEDEFVKHKILDAIGDLYLLGNSLIGEFRGFKSGHALNNRLLRALLEQKDAWEVVTFEDAMSAPISYVRPIAAV.

Zn(2+)-binding residues include His78, His237, and Asp241. His264 acts as the Proton donor in catalysis.

It belongs to the LpxC family. Zn(2+) serves as cofactor.

The enzyme catalyses a UDP-3-O-[(3R)-3-hydroxyacyl]-N-acetyl-alpha-D-glucosamine + H2O = a UDP-3-O-[(3R)-3-hydroxyacyl]-alpha-D-glucosamine + acetate. It functions in the pathway glycolipid biosynthesis; lipid IV(A) biosynthesis; lipid IV(A) from (3R)-3-hydroxytetradecanoyl-[acyl-carrier-protein] and UDP-N-acetyl-alpha-D-glucosamine: step 2/6. Its function is as follows. Catalyzes the hydrolysis of UDP-3-O-myristoyl-N-acetylglucosamine to form UDP-3-O-myristoylglucosamine and acetate, the committed step in lipid A biosynthesis. The protein is UDP-3-O-acyl-N-acetylglucosamine deacetylase of Azotobacter vinelandii (strain DJ / ATCC BAA-1303).